The primary structure comprises 1019 residues: TOG array regulator of axonemal microtubules protein 2 (1019 aa).

Disordered regions lie at residues 28–54 (AGPR…PEPR), 131–158 (RRLS…PLHS), 249–311 (TPSR…AKKP), and 991–1019 (SLGG…FQLD). Residues 1007-1019 (SKTTGSSYPFQLD) are compositionally biased toward polar residues.

This sequence belongs to the Crescerin family.

The chain is TOG array regulator of axonemal microtubules protein 2 from Homo sapiens (Human).